Reading from the N-terminus, the 88-residue chain is HssA/B-like protein 9 (88 aa).

A compositionally biased stretch (polar residues) spans 1 to 14; that stretch reads MSILSALTSISNPM. Positions 1-26 are disordered; sequence MSILSALTSISNPMKSSKSSVANGGG.

Belongs to the hssA/B family.

The protein is HssA/B-like protein 9 (hssl9) of Dictyostelium discoideum (Social amoeba).